Reading from the N-terminus, the 241-residue chain is Phosphoribosyl isomerase A (241 aa).

D11 (proton acceptor) is an active-site residue. The active-site Proton donor is the D130.

It belongs to the HisA/HisF family.

The protein localises to the cytoplasm. It carries out the reaction 1-(5-phospho-beta-D-ribosyl)-5-[(5-phospho-beta-D-ribosylamino)methylideneamino]imidazole-4-carboxamide = 5-[(5-phospho-1-deoxy-D-ribulos-1-ylimino)methylamino]-1-(5-phospho-beta-D-ribosyl)imidazole-4-carboxamide. It catalyses the reaction N-(5-phospho-beta-D-ribosyl)anthranilate = 1-(2-carboxyphenylamino)-1-deoxy-D-ribulose 5-phosphate. The protein operates within amino-acid biosynthesis; L-histidine biosynthesis; L-histidine from 5-phospho-alpha-D-ribose 1-diphosphate: step 4/9. It functions in the pathway amino-acid biosynthesis; L-tryptophan biosynthesis; L-tryptophan from chorismate: step 3/5. In terms of biological role, involved in both the histidine and tryptophan biosynthetic pathways. The chain is Phosphoribosyl isomerase A from Streptomyces griseus subsp. griseus (strain JCM 4626 / CBS 651.72 / NBRC 13350 / KCC S-0626 / ISP 5235).